Here is a 152-residue protein sequence, read N- to C-terminus: Outer membrane protein assembly factor BamE (152 aa).

Residues 1-32 (MIDQNHDSEEQAQMQKLTRTVTLTVALTLVSG) form the signal peptide. Residue Cys-33 is the site of N-palmitoyl cysteine attachment. The S-diacylglycerol cysteine moiety is linked to residue Cys-33. The interval 114–152 (IDRHGDFSRPPSVADERGIGPTDSTNARGNLLNARPDDE) is disordered.

It belongs to the BamE family. Part of the Bam complex.

It is found in the cell outer membrane. Its function is as follows. Part of the outer membrane protein assembly complex, which is involved in assembly and insertion of beta-barrel proteins into the outer membrane. The sequence is that of Outer membrane protein assembly factor BamE from Halomonas elongata (strain ATCC 33173 / DSM 2581 / NBRC 15536 / NCIMB 2198 / 1H9).